The following is an 855-amino-acid chain: MILKSELLDVHTRLGQMLPFVTKRFASVPTAMRTRRRTRRHEREPNLRKRQGGSHSNLKENEDAELKFKLRQMNEFAKNLKMQMQLADSLRRKEEAARAEGIGGDVAEGAIERDSSTVAAALLEGAEPAEAQPAPLNLSQLIMSAQNAEPLLAPELAERIGDGKLVYSALVNKRAQNWDAIVAALYESAEKLRGLDADIVKEKLLLRVSGLSLEGVATLDKLLTDRFGEGRDFDVDMYGVLFETLGEHTQHTQQAKTVVDRMKKLLQRYDACDDPDKKPLTQEILNCCLKVGTAAKSFDDMNYFLSKFVKDYRILPNKVNYDQVLTFYLKNRTLSQAWETFGAMKFMSLSHRPDVATYNLMLQVCDQERNYSKALDLYHEIQDLKMEPDVRTLSMLAKAMASASTDAIVSEGKSDSLRLTGWKFIHEIENNPKYATAKDDPVCAHGVLTTMMALASYDGDVGLARALFYRHAVQSYKKLMKNANMDAVSNPAAAARAAWTQAIDPVLFNYLLMAYSRYQPNKLPILLGYELGAKFRRQLMFNVDYMGRAESDNDMHANIPLLPVMELSSTAEVLNESRALWEFFLSKHINGSLQPQPSARVVSMLEEYRQNHDTFEGFMKEVKSQVKRWQWHAVNRRLMTPITIMSYLSIPLRLGSYEEFAFRYKQTIYTGNELEESVKNFYDPALVTVSDEATVVVDDSEVKVEKYARKIDDRILQIYSFAYKNRVYNDVFELAMKAATKFRDNSLATRVWKERGEFRKTEGYTSMSVKDRIAGDTSFACATVKFFVAEKRFSEAMAVIMSSQKYIDWKYHMVRELHNALVSIEDSVSIRKLLSVVNKQNRLKVLNTESPSLTP.

Residues 29–61 (PTAMRTRRRTRRHEREPNLRKRQGGSHSNLKEN) form a disordered region. PPR repeat units follow at residues 234–265 (DVDM…MKKL), 317–351 (NKVN…SLSH), and 354–388 (DVAT…KMEP).

This sequence belongs to the CCM1 family. In terms of assembly, binds to mitochondrial small subunit 15S rRNA.

The protein localises to the mitochondrion. Regulates mitochondrial small subunit maturation by controlling 15S rRNA 5'-end processing. Localizes to the 5' precursor of the 15S rRNA in a position that is subsequently occupied by mS47 in the mature yeast mtSSU. Uses structure and sequence-specific RNA recognition, binding to a single-stranded region of the precursor and specifically recognizing bases -6 to -1. The exchange of Ccm1 for mS47 is coupled to the irreversible removal of precursor rRNA that is accompanied by conformational changes of the mitoribosomal proteins uS5m and mS26. These conformational changes signal completion of 5'-end rRNA processing through protection of the mature 5'-end of the 15S rRNA and stabilization of mS47. The removal of the 5' precursor together with the dissociation of Ccm1 may be catalyzed by the 5'-3' exoribonuclease Pet127. Involved in the specific removal of group I introns in mitochondrial encoded transcripts. The sequence is that of Mitochondrial 15S rRNA processing factor CCM1 (CCM1) from Eremothecium gossypii (strain ATCC 10895 / CBS 109.51 / FGSC 9923 / NRRL Y-1056) (Yeast).